The sequence spans 201 residues: E3 ubiquitin-protein ligase LAP (201 aa).

Residues 1–92 (MSTIVDMVDV…RDCHDSLLVN (92 aa)) lie on the Cytoplasmic side of the membrane. An RING-CH-type zinc finger spans residues 9-69 (DVSLVDKCCW…AICETPYNVK (61 aa)). Zn(2+) is bound by residues C17, C20, C31, C33, H41, C44, C59, and C62. The chain crosses the membrane as a helical span at residues 93-113 (LPLCLIVGGISTYTLVSVEII). Topologically, residues 114–123 (KLMESEETSE) are lumenal. The chain crosses the membrane as a helical span at residues 124–144 (LTKVFLVTSFLGPFIVTVLSA). Topologically, residues 145–201 (LRTCIDCRTYFLTTRKRNTIHTLQELEDDDDDDDDDDDDDDEEYADAVEEIIIGPSN) are cytoplasmic. The segment at 168–188 (QELEDDDDDDDDDDDDDDEEY) is disordered. Residues 169 to 188 (ELEDDDDDDDDDDDDDDEEY) show a composition bias toward acidic residues.

It belongs to the poxviridae LAP protein family.

The protein resides in the host membrane. It is found in the host Golgi apparatus. Its subcellular location is the host trans-Golgi network membrane. It localises to the host early endosome membrane. The catalysed reaction is S-ubiquitinyl-[E2 ubiquitin-conjugating enzyme]-L-cysteine + [acceptor protein]-L-lysine = [E2 ubiquitin-conjugating enzyme]-L-cysteine + N(6)-ubiquitinyl-[acceptor protein]-L-lysine.. In terms of biological role, E3 ubiquitin-protein ligase which promotes ubiquitination and subsequent degradation of host MHC-I and CD4 molecules, presumably to prevent lysis of infected cells by cytotoxic T-lymphocytes and NK cell. Binds target molecules through transmembrane interaction. The result of this ubiquitination is the enhancement of the endocytosis of the target chain and the delivery to the lysosome, where it is proteolytically destroyed. The chain is E3 ubiquitin-protein ligase LAP from Oryctolagus cuniculus (Rabbit).